A 119-amino-acid chain; its full sequence is Small ribosomal subunit protein bS16 (119 aa).

This sequence belongs to the bacterial ribosomal protein bS16 family.

The protein is Small ribosomal subunit protein bS16 of Amoebophilus asiaticus (strain 5a2).